The following is a 350-amino-acid chain: Selenide, water dikinase (350 aa).

Residue Cys-17 is part of the active site. Residues Lys-20 and 48-50 each bind ATP; that span reads LFD. Asp-51 contributes to the Mg(2+) binding site. Residues Asp-68, Asp-91, and 139 to 141 each bind ATP; that span reads GHS. Asp-91 is a Mg(2+) binding site. A Mg(2+)-binding site is contributed by Asp-229.

This sequence belongs to the selenophosphate synthase 1 family. Class I subfamily. As to quaternary structure, homodimer. Mg(2+) serves as cofactor.

The catalysed reaction is hydrogenselenide + ATP + H2O = selenophosphate + AMP + phosphate + 2 H(+). Synthesizes selenophosphate from selenide and ATP. The chain is Selenide, water dikinase from Bdellovibrio bacteriovorus (strain ATCC 15356 / DSM 50701 / NCIMB 9529 / HD100).